A 309-amino-acid polypeptide reads, in one-letter code: Porphobilinogen deaminase (309 aa).

Residue cysteine 242 is modified to S-(dipyrrolylmethanemethyl)cysteine.

This sequence belongs to the HMBS family. As to quaternary structure, monomer. Dipyrromethane is required as a cofactor.

It catalyses the reaction 4 porphobilinogen + H2O = hydroxymethylbilane + 4 NH4(+). Its pathway is porphyrin-containing compound metabolism; protoporphyrin-IX biosynthesis; coproporphyrinogen-III from 5-aminolevulinate: step 2/4. Its function is as follows. Tetrapolymerization of the monopyrrole PBG into the hydroxymethylbilane pre-uroporphyrinogen in several discrete steps. The protein is Porphobilinogen deaminase of Legionella pneumophila (strain Lens).